Reading from the N-terminus, the 359-residue chain is Chorismate synthase (359 aa).

Arginine 47 is an NADP(+) binding site. FMN-binding positions include 123–125, glycine 283, 298–302, and arginine 326; these read RSS and KPTSS.

This sequence belongs to the chorismate synthase family. As to quaternary structure, homotetramer. FMNH2 is required as a cofactor.

It carries out the reaction 5-O-(1-carboxyvinyl)-3-phosphoshikimate = chorismate + phosphate. The protein operates within metabolic intermediate biosynthesis; chorismate biosynthesis; chorismate from D-erythrose 4-phosphate and phosphoenolpyruvate: step 7/7. In terms of biological role, catalyzes the anti-1,4-elimination of the C-3 phosphate and the C-6 proR hydrogen from 5-enolpyruvylshikimate-3-phosphate (EPSP) to yield chorismate, which is the branch point compound that serves as the starting substrate for the three terminal pathways of aromatic amino acid biosynthesis. This reaction introduces a second double bond into the aromatic ring system. The protein is Chorismate synthase of Chlamydia pneumoniae (Chlamydophila pneumoniae).